We begin with the raw amino-acid sequence, 508 residues long: Photosystem II CP47 reaction center protein (508 aa).

Helical transmembrane passes span 21-36 (SVHI…WAGS), 101-115 (IAFS…IWHW), 140-156 (GIHL…FGAF), 203-218 (IAAG…FHLS), 237-252 (VLSS…AFVV), and 457-472 (SFAL…HGAR).

It belongs to the PsbB/PsbC family. PsbB subfamily. PSII is composed of 1 copy each of membrane proteins PsbA, PsbB, PsbC, PsbD, PsbE, PsbF, PsbH, PsbI, PsbJ, PsbK, PsbL, PsbM, PsbT, PsbX, PsbY, PsbZ, Psb30/Ycf12, at least 3 peripheral proteins of the oxygen-evolving complex and a large number of cofactors. It forms dimeric complexes. Binds multiple chlorophylls. PSII binds additional chlorophylls, carotenoids and specific lipids. is required as a cofactor.

It localises to the plastid membrane. Its function is as follows. One of the components of the core complex of photosystem II (PSII). It binds chlorophyll and helps catalyze the primary light-induced photochemical processes of PSII. PSII is a light-driven water:plastoquinone oxidoreductase, using light energy to abstract electrons from H(2)O, generating O(2) and a proton gradient subsequently used for ATP formation. The protein is Photosystem II CP47 reaction center protein of Cuscuta reflexa (Southern Asian dodder).